The primary structure comprises 156 residues: MKITILAVGTKMPRWVDEAYTDYAKRFGRDITLELKEIKPEKRGGGVTAEKGIAAEHERLIAAIPPRARLVVMDERGKNWTSVKLAEGLKEWMAGGGDVVFVIGGADGLSAELKQRADVLLQLSAMTLPHGMVRVMLAEQIYRAYSILNNHPYHRE.

Residues glycine 104 and 123-128 (LSAMTL) each bind S-adenosyl-L-methionine.

Belongs to the RNA methyltransferase RlmH family. In terms of assembly, homodimer.

It localises to the cytoplasm. It carries out the reaction pseudouridine(1915) in 23S rRNA + S-adenosyl-L-methionine = N(3)-methylpseudouridine(1915) in 23S rRNA + S-adenosyl-L-homocysteine + H(+). In terms of biological role, specifically methylates the pseudouridine at position 1915 (m3Psi1915) in 23S rRNA. The chain is Ribosomal RNA large subunit methyltransferase H from Chromobacterium violaceum (strain ATCC 12472 / DSM 30191 / JCM 1249 / CCUG 213 / NBRC 12614 / NCIMB 9131 / NCTC 9757 / MK).